Consider the following 559-residue polypeptide: (-)-drimenol synthase (559 aa).

Mg(2+) contacts are provided by Asp-311, Asp-315, Asp-456, Ser-460, and Glu-464. A DDXXD motif motif is present at residues 311 to 315 (DDIYD).

Belongs to the terpene synthase family. The cofactor is Mg(2+).

The enzyme catalyses (2E,6E)-farnesyl diphosphate + H2O = (5S,9S,10S)-drim-7-en-11-ol + diphosphate. It participates in secondary metabolite biosynthesis; terpenoid biosynthesis. Catalyzes the conversion of (2E,6E)-farnesyl diphosphate (FPP) into drimenol, a precursor of the sesquiterpenoid polygodial. Polygodial has been shown to be an antifeedant for a number of herbivorous insects. This Persicaria hydropiper (Marshpepper knotweed) protein is (-)-drimenol synthase.